Here is a 277-residue protein sequence, read N- to C-terminus: uncharacterized protein (277 aa).

7 helical membrane passes run 23 to 43 (CIGG…TAFI), 61 to 81 (FLIY…IIGG), 117 to 137 (LVLL…FGIF), 144 to 164 (IIGA…VISL), 197 to 217 (YIIL…IVVL), 221 to 241 (IIDI…IIYI), and 243 to 263 (IKGI…VFSI).

It to M.jannaschii MJ1189.

The protein localises to the cell membrane. This is an uncharacterized protein from Methanocaldococcus jannaschii (strain ATCC 43067 / DSM 2661 / JAL-1 / JCM 10045 / NBRC 100440) (Methanococcus jannaschii).